Consider the following 275-residue polypeptide: Phosphate import ATP-binding protein PstB 2 (275 aa).

The region spanning 29–270 (LEVKNLNIYY…PSEKKTEDYI (242 aa)) is the ABC transporter domain. 61–68 (GPSGCGKS) is a binding site for ATP.

The protein belongs to the ABC transporter superfamily. Phosphate importer (TC 3.A.1.7) family. As to quaternary structure, the complex is composed of two ATP-binding proteins (PstB), two transmembrane proteins (PstC and PstA) and a solute-binding protein (PstS).

It is found in the cell membrane. It carries out the reaction phosphate(out) + ATP + H2O = ADP + 2 phosphate(in) + H(+). Functionally, part of the ABC transporter complex PstSACB involved in phosphate import. Responsible for energy coupling to the transport system. The polypeptide is Phosphate import ATP-binding protein PstB 2 (Bacillus licheniformis (strain ATCC 14580 / DSM 13 / JCM 2505 / CCUG 7422 / NBRC 12200 / NCIMB 9375 / NCTC 10341 / NRRL NRS-1264 / Gibson 46)).